A 300-amino-acid chain; its full sequence is ATP synthase gamma chain (300 aa).

Belongs to the ATPase gamma chain family. As to quaternary structure, F-type ATPases have 2 components, CF(1) - the catalytic core - and CF(0) - the membrane proton channel. CF(1) has five subunits: alpha(3), beta(3), gamma(1), delta(1), epsilon(1). CF(0) has three main subunits: a, b and c.

It localises to the cell membrane. In terms of biological role, produces ATP from ADP in the presence of a proton gradient across the membrane. The gamma chain is believed to be important in regulating ATPase activity and the flow of protons through the CF(0) complex. The polypeptide is ATP synthase gamma chain (Acidothermus cellulolyticus (strain ATCC 43068 / DSM 8971 / 11B)).